A 648-amino-acid polypeptide reads, in one-letter code: MSNSNNNSSSGNHNSTTINNPKVNVYSNIPNSTTYTYGSGGGGTLSGNNTNNNNTNNNNNNNNNSSGDNKNHSPVTSATDRLTKMDIEEKWDNKNYEKDEREKSPLFHILASNLNSFGNFKVPSTFSLTPPEPNKQQQPQQQPQQQQPQQQQPQQQQPQQQQQQQPQQQQQPQQQLQQNNQQQQQQLQQQQLQQQLQQQQQQQQQQQQQQQQKQQKQQQQQQQHLHQDGIVNTPSTTQTSTTTTTTTTTTNPHTSGLSLQHAHSSYTPSNVLHSPTHFQSSLPTRLDTNPITTPIRQQQQSQQQLQQQQLQQIPPPTVNSFFLPPPVNARERLKEFKQIRVIGTGTFGKVYLIQNTKDGCYYAMKCLNKAYVVQLKQVEHLNSEKSILSSIHHPFIVNLYQAFQDEKKLYLLFEYVAGGEVFTHLRKSMKFSNSTAKFYAAEIVLALEFLHKQNIVYRDLKPENLLIDNQGHIKITDFGFAKRVEDRTFTLCGTPEYLAPEIIQSKGHGKAVDWWALGILIFEMLAGYPPFYDDDTFAIYNKILAGRITFPLGFDVDAKDLIKRLLTADRTRRLGALKDGALDVKNHRWFSDINWERLYQRRDNGPFIPKIQHQGDSSNFEMYDEEEMVEEPPSSNYVDPYAHLFKDF.

4 stretches are compositionally biased toward low complexity: residues 1 to 20 (MSNS…TINN), 46 to 67 (SGNN…NSSG), 136 to 175 (QQQP…PQQQ), and 232 to 254 (NTPS…NPHT). Disordered regions lie at residues 1–25 (MSNS…KVNV), 40–86 (GGGG…TKMD), 121–175 (KVPS…PQQQ), and 219–290 (QQQQ…DTNP). Residues 255-290 (SGLSLQHAHSSYTPSNVLHSPTHFQSSLPTRLDTNP) show a composition bias toward polar residues. A Protein kinase domain is found at 336-590 (FKQIRVIGTG…ALDVKNHRWF (255 aa)). Residues 342–350 (IGTGTFGKV) and lysine 365 contribute to the ATP site. Aspartate 459 functions as the Proton acceptor in the catalytic mechanism. Threonine 490 is subject to Phosphothreonine. One can recognise an AGC-kinase C-terminal domain in the interval 591–648 (SDINWERLYQRRDNGPFIPKIQHQGDSSNFEMYDEEEMVEEPPSSNYVDPYAHLFKDF).

This sequence belongs to the protein kinase superfamily. AGC Ser/Thr protein kinase family. cAMP subfamily. As to quaternary structure, in Dictyostelium the holoenzyme is a dimer composed of a regulatory (R) and a catalytic (C) subunit. In the presence of cAMP it dissociates into the active C subunit and an R monomer.

It catalyses the reaction L-seryl-[protein] + ATP = O-phospho-L-seryl-[protein] + ADP + H(+). It carries out the reaction L-threonyl-[protein] + ATP = O-phospho-L-threonyl-[protein] + ADP + H(+). Essential for differentiation and fruit morphogenesis. The protein is cAMP-dependent protein kinase catalytic subunit (pkaC) of Dictyostelium discoideum (Social amoeba).